A 155-amino-acid polypeptide reads, in one-letter code: Nascent polypeptide-associated complex subunit beta (155 aa).

Disordered stretches follow at residues 1–35 and 116–155; these read MDQA…SGAD and LAES…SNVE. Residues 20-30 show a composition bias toward basic residues; that stretch reads TPRRKVKKVHK. Residues 33–98 enclose the NAC-A/B domain; it reads GADDKKLQAT…GEEKELTELV (66 aa). Positions 136-155 are enriched in acidic residues; the sequence is DEEDDIPDLVEGENFESNVE.

The protein belongs to the NAC-beta family. Part of the nascent polypeptide-associated complex (NAC), consisting of egd2 and egd1. NAC associates with ribosomes via egd1.

The protein resides in the cytoplasm. It is found in the nucleus. In terms of biological role, component of the nascent polypeptide-associated complex (NAC), a dynamic component of the ribosomal exit tunnel, protecting the emerging polypeptides from interaction with other cytoplasmic proteins to ensure appropriate nascent protein targeting. The NAC complex also promotes mitochondrial protein import by enhancing productive ribosome interactions with the outer mitochondrial membrane and blocks the inappropriate interaction of ribosomes translating non-secretory nascent polypeptides with translocation sites in the membrane of the endoplasmic reticulum. EGD1 may act as a transcription factor that exert a negative effect on the expression of several genes that are transcribed by RNA polymerase II. The polypeptide is Nascent polypeptide-associated complex subunit beta (egd1) (Aspergillus niger (strain ATCC MYA-4892 / CBS 513.88 / FGSC A1513)).